The chain runs to 339 residues: Deubiquitinase and deneddylase Dub2 (339 aa).

The chain crosses the membrane as a helical span at residues 36–56 (IIIALFLIVISCGLILCAYTF). Residues histidine 203, aspartate 220, and cysteine 282 contribute to the active site.

Belongs to the peptidase C48 family.

The protein localises to the secreted. Its subcellular location is the host cell. It localises to the membrane. Its function is as follows. Effector proteins function to alter host cell physiology and promote bacterial survival in host tissues. This protease possesses deubiquitinating and deneddylating activities. The chain is Deubiquitinase and deneddylase Dub2 (cdu2) from Chlamydia trachomatis serovar D (strain ATCC VR-885 / DSM 19411 / UW-3/Cx).